We begin with the raw amino-acid sequence, 51 residues long: Basic phospholipase A2 Bfon11 (51 aa).

Tyr-27, Gly-29, and Gly-31 together coordinate Ca(2+). A disulfide bridge connects residues Cys-28 and Cys-43. His-46 is an active-site residue. Asp-47 provides a ligand contact to Ca(2+).

This sequence belongs to the phospholipase A2 family. Group II subfamily. D49 sub-subfamily. It depends on Ca(2+) as a cofactor. Expressed by the venom gland.

The protein localises to the secreted. It carries out the reaction a 1,2-diacyl-sn-glycero-3-phosphocholine + H2O = a 1-acyl-sn-glycero-3-phosphocholine + a fatty acid + H(+). Functionally, snake venom phospholipase A2 (PLA2) that impairs hemostasis. PLA2 catalyzes the calcium-dependent hydrolysis of the 2-acyl groups in 3-sn-phosphoglycerides. In Bothrops fonsecai (Fonseca's lancehead), this protein is Basic phospholipase A2 Bfon11.